Reading from the N-terminus, the 345-residue chain is Transcription factor 19 (345 aa).

Residues 31–88 (YRLGHRADLCDVALRPQQEPGLISGIHAELHAEPRGDDWRVSLEDHSSQGTLVNNVRL) enclose the FHA domain. Ser-78 carries the phosphoserine modification. 2 disordered regions span residues 147-167 (AGFR…STLS) and 190-227 (LTFS…RKSV). The PHD-type zinc-finger motif lies at 293-342 (AAPCCCLPQEETVAWVQCDGCDVWFHVACVGCSIQAAREADFRCPGCRAG). Residues Cys-296, Cys-298, Cys-310, Cys-313, His-318, Cys-321, Cys-336, and Cys-339 each contribute to the Zn(2+) site.

It is found in the nucleus. Potential transcription factor that may play a role in the regulation of genes involved in cell cycle G1/S transition. May bind to regulatory elements of genes, including the promoter of the transcription factor FOXO1. In Pan troglodytes (Chimpanzee), this protein is Transcription factor 19 (TCF19).